We begin with the raw amino-acid sequence, 138 residues long: Phospholipase A2 homolog 1 (138 aa).

The first 16 residues, 1–16, serve as a signal peptide directing secretion; that stretch reads MRTLWIMAVLLVGVEG. 7 disulfide bridges follow: C42–C132, C44–C60, C59–C111, C65–C138, C66–C104, C73–C97, and C91–C102. The interval 121–134 is important for membrane-damaging activities in eukaryotes and bacteria; heparin-binding; the sequence is KKYKNNYLKPFCKK.

This sequence belongs to the phospholipase A2 family. Group II subfamily. K49 sub-subfamily. In terms of assembly, homodimer; non-covalently linked (probable alternative/compact dimer conformation in solution). In terms of tissue distribution, expressed by the venom gland.

It is found in the secreted. In terms of biological role, snake venom phospholipase A2 homolog that lacks enzymatic and anticoagulant activities. In mice, it induces conspicuous local myonecrosis, edema, and a systemic interleukin-6 response. In vitro, it is cytolytic upon myoblasts, and weakly bactericidal. A model of myotoxic mechanism has been proposed: an apo Lys49-PLA2 is activated by the entrance of a hydrophobic molecule (e.g. fatty acid) at the hydrophobic channel of the protein leading to a reorientation of a monomer. This reorientation causes a transition between 'inactive' to 'active' states, causing alignment of C-terminal and membrane-docking sites (MDoS) side-by-side and putting the membrane-disruption sites (MDiS) in the same plane, exposed to solvent and in a symmetric position for both monomers. The MDoS region stabilizes the toxin on membrane by the interaction of charged residues with phospholipid head groups. Subsequently, the MDiS region destabilizes the membrane with penetration of hydrophobic residues. This insertion causes a disorganization of the membrane, allowing an uncontrolled influx of ions (i.e. calcium and sodium), and eventually triggering irreversible intracellular alterations and cell death. The polypeptide is Phospholipase A2 homolog 1 (Bothrops atrox (Barba amarilla)).